The following is a 407-amino-acid chain: MSQKMMYEFKRKLEELEKYKGRGTELITLYIPPDKNIADVSNQLRSELSQASNIKSKQTRTNVLAGIEAILNRLKHFRKPPENGMVIISGVVNINGKEKHITEIIEPPEPVPLYKYHCDSKFYLDPLKEMLTEKKLYGLIVLDRREATVGLLKGKRIEVLDWDTSMVPGKHRQGGQSSVRFERLREIAIHEFYKKVGEMASEALLPYKDKLIGILIGGPSPTKEEFYEGEYLHHELQKKVLGLFDVGYTDESGLYELVEKAKDVLQEVDIIREKNLMQRFLKEVARDGLAAYGEEEVRRYIELGAVDTLLLSEDLRYERVKYRCPKCGKEVEVTVREGIEKPPFCEEDNVEMEEVERRDIVLELSELAESTGAKVEFLSTESEEGEMLYKAFGGIAAILRFKPDGGQ.

Belongs to the eukaryotic release factor 1 family. In terms of assembly, heterodimer of two subunits, one of which binds GTP.

The protein resides in the cytoplasm. Its function is as follows. Directs the termination of nascent peptide synthesis (translation) in response to the termination codons UAA, UAG and UGA. This is Peptide chain release factor subunit 1 (prf1) from Archaeoglobus fulgidus (strain ATCC 49558 / DSM 4304 / JCM 9628 / NBRC 100126 / VC-16).